Here is a 380-residue protein sequence, read N- to C-terminus: Probable tRNA sulfurtransferase (380 aa).

Residues 58 to 162 (EEVIERLKKV…MAFVYAGVIE (105 aa)) form the THUMP domain. ATP-binding positions include 178–179 (LL), 203–204 (YF), arginine 260, glycine 282, and glutamine 291.

This sequence belongs to the ThiI family.

It is found in the cytoplasm. The catalysed reaction is [ThiI sulfur-carrier protein]-S-sulfanyl-L-cysteine + a uridine in tRNA + 2 reduced [2Fe-2S]-[ferredoxin] + ATP + H(+) = [ThiI sulfur-carrier protein]-L-cysteine + a 4-thiouridine in tRNA + 2 oxidized [2Fe-2S]-[ferredoxin] + AMP + diphosphate. The enzyme catalyses [ThiS sulfur-carrier protein]-C-terminal Gly-Gly-AMP + S-sulfanyl-L-cysteinyl-[cysteine desulfurase] + AH2 = [ThiS sulfur-carrier protein]-C-terminal-Gly-aminoethanethioate + L-cysteinyl-[cysteine desulfurase] + A + AMP + 2 H(+). Its pathway is cofactor biosynthesis; thiamine diphosphate biosynthesis. In terms of biological role, catalyzes the ATP-dependent transfer of a sulfur to tRNA to produce 4-thiouridine in position 8 of tRNAs, which functions as a near-UV photosensor. Also catalyzes the transfer of sulfur to the sulfur carrier protein ThiS, forming ThiS-thiocarboxylate. This is a step in the synthesis of thiazole, in the thiamine biosynthesis pathway. The sulfur is donated as persulfide by IscS. The sequence is that of Probable tRNA sulfurtransferase from Thermoanaerobacter sp. (strain X514).